The chain runs to 124 residues: Colorectal cancer-associated protein 1 (124 aa).

The chain crosses the membrane as a helical span at residues 77–97; the sequence is LYGCFCVGLVSGMAISVLLLA.

Expressed in gastrointestinal and immune tissue, as well as prostate, testis and ovary. Expressed in lamina propria and eosinophils but not in epithelial cells. Expression is greater in benign adjacent tissues than in colon tumors.

The protein resides in the membrane. This chain is Colorectal cancer-associated protein 1 (COLCA1), found in Homo sapiens (Human).